A 785-amino-acid chain; its full sequence is uncharacterized protein (785 aa).

Residues 293–421 (LVGYFLSEGY…LRLISLRLGF (129 aa)) enclose the DOD-type homing endonuclease domain.

Post-translationally, this protein undergoes a protein self splicing that involves a post-translational excision of the intervening region (intein) followed by peptide ligation.

This is an uncharacterized protein from Methanocaldococcus jannaschii (strain ATCC 43067 / DSM 2661 / JAL-1 / JCM 10045 / NBRC 100440) (Methanococcus jannaschii).